The chain runs to 429 residues: Methylenetetrahydrofolate--tRNA-(uracil-5-)-methyltransferase TrmFO (429 aa).

7 to 12 serves as a coordination point for FAD; the sequence is GAGLAG.

This sequence belongs to the MnmG family. TrmFO subfamily. The cofactor is FAD.

It is found in the cytoplasm. The catalysed reaction is uridine(54) in tRNA + (6R)-5,10-methylene-5,6,7,8-tetrahydrofolate + NADH + H(+) = 5-methyluridine(54) in tRNA + (6S)-5,6,7,8-tetrahydrofolate + NAD(+). The enzyme catalyses uridine(54) in tRNA + (6R)-5,10-methylene-5,6,7,8-tetrahydrofolate + NADPH + H(+) = 5-methyluridine(54) in tRNA + (6S)-5,6,7,8-tetrahydrofolate + NADP(+). Its function is as follows. Catalyzes the folate-dependent formation of 5-methyl-uridine at position 54 (M-5-U54) in all tRNAs. In Thermosipho africanus (strain TCF52B), this protein is Methylenetetrahydrofolate--tRNA-(uracil-5-)-methyltransferase TrmFO.